A 352-amino-acid polypeptide reads, in one-letter code: Glycerol-1-phosphate dehydrogenase [NAD(P)+] (352 aa).

NAD(+)-binding positions include 98 to 102 (GKPID) and 120 to 123 (TAAS). Asp125 serves as a coordination point for substrate. Ser129 is a binding site for NAD(+). Position 172 (Asp172) interacts with substrate. Asp172 and His252 together coordinate Zn(2+). Position 256 (His256) interacts with substrate. Position 268 (His268) interacts with Zn(2+).

The protein belongs to the glycerol-1-phosphate dehydrogenase family. Zn(2+) is required as a cofactor.

The protein localises to the cytoplasm. It catalyses the reaction sn-glycerol 1-phosphate + NAD(+) = dihydroxyacetone phosphate + NADH + H(+). The catalysed reaction is sn-glycerol 1-phosphate + NADP(+) = dihydroxyacetone phosphate + NADPH + H(+). It participates in membrane lipid metabolism; glycerophospholipid metabolism. Functionally, catalyzes the NAD(P)H-dependent reduction of dihydroxyacetonephosphate (DHAP or glycerone phosphate) to glycerol 1-phosphate (G1P). The G1P thus generated is used as the glycerophosphate backbone of phospholipids in the cellular membranes of Archaea. This is Glycerol-1-phosphate dehydrogenase [NAD(P)+] from Natronomonas pharaonis (strain ATCC 35678 / DSM 2160 / CIP 103997 / JCM 8858 / NBRC 14720 / NCIMB 2260 / Gabara) (Halobacterium pharaonis).